Reading from the N-terminus, the 448-residue chain is Packaging protein 1 (448 aa).

The tract at residues 1-76 is disordered; sequence METKGRRSAA…SQPAKRGGLL (76 aa). The segment covering 22 to 31 has biased composition (basic residues); it reads PRKRPTRRAP. The segment covering 56–67 has biased composition (polar residues); that stretch reads RPSSDSLLQEPS. Residue 171–178 participates in ATP binding; that stretch reads GPTGCGKS. The segment at 440-448 is DNA-binding; sequence RAYRARKIK.

This sequence belongs to the adenoviridae packaging protein 1 family. As to quaternary structure, homodimer. Part of a genome packaging complex composed of packaging proteins 1, 2 and 3; this complex specifically binds to the packaging sequence on the left end of viral genomic DNA and performs packaging of the viral genome. Interacts with protein 33K.

It is found in the virion. The protein localises to the host nucleus. Its subcellular location is the host nucleoplasm. The protein resides in the host nucleolus. Functionally, component of the packaging machinery which encapsidates the viral DNA into preformed capsids and transcriptional activator of the viral major late promoter (MLP). Binds, along with packaging proteins 2 and 3, to the specific packaging sequence on the left end of viral genomic DNA and displays ATPase activity thereby providing the power stroke of the packaging machinery. The activity of packaging protein IVa2 is stimulated by protein 33K which acts as a terminase. May be the protein that pumps DNA into the capsid powered by ATP hydrolysis. Specifically binds to the 5'-CG-3' nucleotides of the repeats making up the packaging sequence. Component of the DEF-A and DEF-B transcription factors that bind downstream elements of the major late promoter (MLP), and stimulate transcription from the MLP after initiation of viral DNA replication. DEF-A is a heterodimer packaging proteins 1 and 2 and DEF-B is a homodimer of packaging protein 1. The polypeptide is Packaging protein 1 (Human adenovirus B serotype 7 (HAdV-7)).